Here is an 84-residue protein sequence, read N- to C-terminus: Defensin-like protein 140 (84 aa).

An N-terminal signal peptide occupies residues 1 to 28 (MSKSLQLIVTVLCIFTILVLGEICLAKG). Cystine bridges form between Cys-37–Cys-81, Cys-46–Cys-65, Cys-51–Cys-75, and Cys-55–Cys-77.

The protein belongs to the DEFL family.

The protein localises to the secreted. The chain is Defensin-like protein 140 (LCR15) from Arabidopsis thaliana (Mouse-ear cress).